The primary structure comprises 631 residues: MAGVGEGDSGGVERDDIGMVAASPVASRVNGKVDADVVGRFATCCRALGIAVYQRKRPPDLAAARSGFAALTRVAHDQCDAWTGLAAAGDQSIGVLEAASRTATTAGVLQRQVELADNALGFLYDTGLYLRFRATGPDDFHLAYAAALASTGGPEEFAKANHVVSGITERRAGWRAARWLAVVINYRAERWSDVVKLLTPMVNDPDLDEAFSHAAKITLGTALARLGMFAPALSYLEEPDGPVAVAAVDGALAKALVLRAHVDEESASEVLQDLYAAHPENEQVEQALSDTSFGIVTTTAGRIEARTDPWDPATEPGAEDFVDPAAHERKAALLHEAELQLAEFIGLDEVKRQVSRLKSSVAMELVRKQRGLTVAQRTHHLVFAGPPGTGKTTIARVVAKIYCGLGLLKRENIREVHRADLIGQHIGETEAKTNAIIDSALDGVLFLDEAYALVATGAKNDFGLVAIDTLLARMENDRDRLVVIIAGYRADLDKFLDTNEGLRSRFTRNIDFPSYTSHELVEIAHKMAEQRDSVFEQSALHDLEALFAKLAAESTPDTNGISRRSLDIAGNGRFVRNIVERSEEEREFRLDHSEHAGSGEFSDEELMTITADDVGRSVEPLLRGLGLSVRA.

385-392 (GPPGTGKT) provides a ligand contact to ATP.

Belongs to the CbxX/CfxQ family. In terms of assembly, part of the ESX-3 / type VII secretion system (T7SS), which is composed of cytosolic and membrane components.

It localises to the cytoplasm. Its function is as follows. Part of the ESX-3 specialized secretion system, which is important for iron and zinc uptake or homeostasis. EccA3 exhibits ATPase activity and may provide energy for the export of ESX-3 substrates. The polypeptide is ESX-3 secretion system protein EccA3 (Mycobacterium tuberculosis (strain CDC 1551 / Oshkosh)).